We begin with the raw amino-acid sequence, 203 residues long: Recombination protein RecR (203 aa).

Residues 56-71 (CTVCGNVSDDERCRIC) form a C4-type zinc finger. Residues 79 to 179 (SVVCVVEEPK…TVTRIASGLP (101 aa)) enclose the Toprim domain.

It belongs to the RecR family.

Functionally, may play a role in DNA repair. It seems to be involved in an RecBC-independent recombinational process of DNA repair. It may act with RecF and RecO. The sequence is that of Recombination protein RecR from Mycobacterium leprae (strain TN).